The chain runs to 78 residues: Large ribosomal subunit protein bL28 (78 aa).

It belongs to the bacterial ribosomal protein bL28 family.

The sequence is that of Large ribosomal subunit protein bL28 from Dichelobacter nodosus (strain VCS1703A).